A 362-amino-acid polypeptide reads, in one-letter code: 3-dehydroquinate synthase (362 aa).

NAD(+)-binding positions include 71 to 76 (DGEQYK), 105 to 109 (GVIGD), 129 to 130 (TT), Lys142, Lys151, and 169 to 172 (CLST). Zn(2+)-binding residues include Glu184, His247, and His264.

It belongs to the sugar phosphate cyclases superfamily. Dehydroquinate synthase family. Co(2+) is required as a cofactor. Requires Zn(2+) as cofactor. NAD(+) serves as cofactor.

It is found in the cytoplasm. It carries out the reaction 7-phospho-2-dehydro-3-deoxy-D-arabino-heptonate = 3-dehydroquinate + phosphate. The protein operates within metabolic intermediate biosynthesis; chorismate biosynthesis; chorismate from D-erythrose 4-phosphate and phosphoenolpyruvate: step 2/7. Catalyzes the conversion of 3-deoxy-D-arabino-heptulosonate 7-phosphate (DAHP) to dehydroquinate (DHQ). The protein is 3-dehydroquinate synthase of Vibrio atlanticus (strain LGP32) (Vibrio splendidus (strain Mel32)).